A 287-amino-acid polypeptide reads, in one-letter code: Lys-63-specific deubiquitinase (287 aa).

The MPN domain occupies 33–176 (VHLESDAFLV…YTCFQSVQAQ (144 aa)). Residues histidine 119, histidine 121, and aspartate 132 each coordinate Zn(2+). Positions 119-132 (HSHPHITVWPSHVD) match the JAMM motif motif. Positions 256–283 (LQWLEDRLEQNKQSIITLQKEKELLTQE) form a coiled coil.

This sequence belongs to the peptidase M67A family. BRCC36 subfamily. In terms of assembly, monomer. Homodimer. Component of the BRISC complex, at least composed of abraxas2, brcc3, babam1 and babam2. Interacts with abraxas2; the interaction is direct and may form a heterotetramer. Component of the BRCA1-A complex. Both the BRCA1-A complex and the BRISC complex bind polyubiquitin. Zn(2+) serves as cofactor.

It is found in the nucleus. It localises to the cytoplasm. The protein resides in the cytoskeleton. The protein localises to the spindle pole. In terms of biological role, metalloprotease that specifically cleaves 'Lys-63'-linked polyubiquitin chains, leaving the last ubiquitin chain attached to its substrates. Catalytic subunit of the BRISC complex, a multiprotein complex that specifically cleaves 'Lys-63'-linked ubiquitin in various substrates; brcc3 does not have activity by itself, but needs to be associated into a higher-order assembly, for minimal in vitro activity. The chain is Lys-63-specific deubiquitinase from Danio rerio (Zebrafish).